The sequence spans 645 residues: Putative bifunctional exonuclease/endonuclease protein MT2247 (645 aa).

In terms of domain architecture, Exonuclease spans 44–207 (VVVDLETTGG…DDARATVDVL (164 aa)). In terms of domain architecture, GIY-YIG spans 248-326 (HRPGVYLFRG…LSTHAPPYNR (79 aa)). Residues 603–645 (WQSDLPTEPHPSREQLFGRTGVDCRTGPPQPLLPGRQPFSTAG) form a disordered region. A compositionally biased stretch (low complexity) spans 635–645 (LPGRQPFSTAG).

In Mycobacterium tuberculosis (strain CDC 1551 / Oshkosh), this protein is Putative bifunctional exonuclease/endonuclease protein MT2247.